The following is a 501-amino-acid chain: MNTLNETAAADESLDTAFLSSPQCAAPQRFQKIKRKSRASPETERKKPKSTIGKQGENPSATEPRYGGNSNRFGLLAHLTADKQVGNEIGDLYDQPSTSHQAAIAAAKRDAASAGTTSSAKRAQSKPPPIVMEGVDDVYLMMQSIENIVDLEKIEARASMSGVLRLYAADANTFRTIVNWLEIEEYEFHCYQLKEDRPYRVCVKGLHHSTLHHQIKDELEKIGHKVLDIHTPLRRNEPGTSKASPVNMFFLNIAAAANNKEILAVKALCHMRVVIEPLRKRNAIVQCHRCQQIGHTAKYCRKAHICVKCAGEHPAKDCTRPRIELCTCYNCGGQHPANYKGCSKLQAFLQRSRPRSGVAGRTEVSDRPTPRGLAGGKEIPSSRGGISYADVARGSIHHKQPMSLTHQQQKQKQQPYDGSPSRQRSRSRTRASRGTLQRSTDASSSIEAILQTLNENINSLRSIQEKQMELMMMMMKQQQQQSHQQGQIINLLTALQARQAP.

2 disordered regions span residues 20-71 (SSPQ…GNSN) and 105-128 (AAAK…SKPP). The CCHC-type zinc-finger motif lies at 285 to 302 (VQCHRCQQIGHTAKYCRK). Disordered regions lie at residues 353–385 (RPRS…SRGG) and 400–443 (QPMS…TDAS). Over residues 407–422 (QQQKQKQQPYDGSPSR) the composition is skewed to low complexity. Over residues 434–443 (GTLQRSTDAS) the composition is skewed to polar residues.

It localises to the virion. Functionally, strongly basic protein that binds directly to retroviral RNA and may be involved in its packaging and in the reverse transcription process. The sequence is that of Nucleic-acid-binding protein from transposon X-element from Drosophila melanogaster (Fruit fly).